The primary structure comprises 454 residues: Protein IQ-DOMAIN 1 (454 aa).

The interval 103–113 (GKSKEEAAAIL) is calmodulin-binding. Positions 107–136 (EEAAAILIQSTFRGHLARRESQVMRGQERL) constitute an IQ domain. The tract at residues 272–454 (WESSEKEQNT…KGVLKAERTP (183 aa)) is disordered. Over residues 280-328 (NTTNNDNSSVKNSTNRNSQGGETAKSSNRNKLNSSTKPNTPSASSTATR) the composition is skewed to polar residues. Over residues 343 to 356 (KSSDDEAKSSERNR) the composition is skewed to basic and acidic residues. Over residues 371–388 (LSSSTARRSSNLIPTTKS) the composition is skewed to polar residues. Residues 397–412 (TSSRVAVTTSTTEESS) are compositionally biased toward low complexity. The Nuclear localization signal signature appears at 421-428 (KKRLSTSA). Basic and acidic residues predominate over residues 442 to 454 (KVEKGVLKAERTP).

Belongs to the IQD family. Binds to multiple calmodulin (CaM) in the presence of Ca(2+)(e.g. CaM1 and CaM2) and CaM-like (e.g. CML8 and CML9) proteins. Interacts with KLCR1. Expressed in roots, flowers, stems, siliques, inflorescence stems and whole shoots. Restricted to the vascular bundles.

It localises to the nucleus. Its subcellular location is the nucleolus. The protein localises to the cytoplasm. The protein resides in the cytoskeleton. In terms of biological role, may be involved in cooperative interactions with calmodulins or calmodulin-like proteins. Modulates expression of glucosinolate pathway genes. May associate with nucleic acids and regulate gene expression at the transcriptional or post-transcriptional level. Recruits KLCR1 and calmodulin proteins to microtubules, thus being a potential scaffold in cellular signaling and trafficking. The chain is Protein IQ-DOMAIN 1 from Arabidopsis thaliana (Mouse-ear cress).